The following is a 295-amino-acid chain: Nitrogenase iron protein 1 (295 aa).

Position 12-19 (12-19 (GKGGIGKS)) interacts with ATP. [4Fe-4S] cluster is bound at residue Cys-100. Arg-103 is modified (ADP-ribosylarginine; by dinitrogenase reductase ADP-ribosyltransferase). Cys-134 is a binding site for [4Fe-4S] cluster.

This sequence belongs to the NifH/BchL/ChlL family. Homodimer. [4Fe-4S] cluster serves as cofactor. The reversible ADP-ribosylation of Arg-103 inactivates the nitrogenase reductase and regulates nitrogenase activity.

The catalysed reaction is N2 + 8 reduced [2Fe-2S]-[ferredoxin] + 16 ATP + 16 H2O = H2 + 8 oxidized [2Fe-2S]-[ferredoxin] + 2 NH4(+) + 16 ADP + 16 phosphate + 6 H(+). In terms of biological role, the key enzymatic reactions in nitrogen fixation are catalyzed by the nitrogenase complex, which has 2 components: the iron protein and the molybdenum-iron protein. The sequence is that of Nitrogenase iron protein 1 (nifH1) from Mastigocladus laminosus (Fischerella sp.).